The chain runs to 397 residues: Tryptophan synthase beta chain (397 aa).

N6-(pyridoxal phosphate)lysine is present on lysine 86.

Belongs to the TrpB family. In terms of assembly, tetramer of two alpha and two beta chains. The cofactor is pyridoxal 5'-phosphate.

The enzyme catalyses (1S,2R)-1-C-(indol-3-yl)glycerol 3-phosphate + L-serine = D-glyceraldehyde 3-phosphate + L-tryptophan + H2O. The protein operates within amino-acid biosynthesis; L-tryptophan biosynthesis; L-tryptophan from chorismate: step 5/5. Functionally, the beta subunit is responsible for the synthesis of L-tryptophan from indole and L-serine. This Aeromonas hydrophila subsp. hydrophila (strain ATCC 7966 / DSM 30187 / BCRC 13018 / CCUG 14551 / JCM 1027 / KCTC 2358 / NCIMB 9240 / NCTC 8049) protein is Tryptophan synthase beta chain.